The following is a 168-amino-acid chain: Large ribosomal subunit protein uL29c (168 aa).

Positions 1–20 (MLAIHSLSSTPCSSGLTSPP) are disordered. The transit peptide at 1 to 58 (MLAIHSLSSTPCSSGLTSPPKSTLLTKSSFHGLRLPSVNLSSSLRLRVQTPPSSVVVM) directs the protein to the chloroplast.

Component of the chloroplast large ribosomal subunit (LSU). Mature 70S chloroplast ribosomes of higher plants consist of a small (30S) and a large (50S) subunit. The 30S small subunit contains 1 molecule of ribosomal RNA (16S rRNA) and 24 different proteins. The 50S large subunit contains 3 rRNA molecules (23S, 5S and 4.5S rRNA) and 33 different proteins.

The protein localises to the plastid. Its subcellular location is the chloroplast. Functionally, component of the chloroplast ribosome (chloro-ribosome), a dedicated translation machinery responsible for the synthesis of chloroplast genome-encoded proteins, including proteins of the transcription and translation machinery and components of the photosynthetic apparatus. The polypeptide is Large ribosomal subunit protein uL29c (RPL29) (Spinacia oleracea (Spinach)).